Consider the following 491-residue polypeptide: Acetylcholine receptor subunit epsilon (491 aa).

A signal peptide spans 1–20 (MAGALLCALLLLQLLGRGEG). At 21–239 (KNEELRLYHY…VIYSLIIRRK (219 aa)) the chain is on the extracellular side. 2 N-linked (GlcNAc...) asparagine glycosylation sites follow: Asn86 and Asn161. Cys148 and Cys162 are disulfide-bonded. The helical transmembrane segment at 240-264 (PLFYVINIIVPCVLISGLVLLAYFL) threads the bilayer. At 265–272 (PAQAGGQK) the chain is on the cytoplasmic side. A helical transmembrane segment spans residues 273–291 (CTVSINVLLAQTVFLFLIA). Topologically, residues 292-306 (QKTPETSLSVPLLGR) are extracellular. A helical membrane pass occupies residues 307–328 (YLIFVMVVATLIVMNCVIVLNV). Residues 329-456 (SLRTPTTHAM…WVRMGKALDS (128 aa)) lie on the Cytoplasmic side of the membrane. The helical transmembrane segment at 457 to 480 (ICFWAALVLFLVGSSLIFLGAYFN) threads the bilayer. The Extracellular portion of the chain corresponds to 481–491 (RVPQLPYPPCM).

Belongs to the ligand-gated ion channel (TC 1.A.9) family. Acetylcholine receptor (TC 1.A.9.1) subfamily. Epsilon/CHRNE sub-subfamily.

The protein localises to the postsynaptic cell membrane. It localises to the cell membrane. The catalysed reaction is K(+)(in) = K(+)(out). It catalyses the reaction Na(+)(in) = Na(+)(out). Its function is as follows. After binding acetylcholine, the AChR responds by an extensive change in conformation that affects all subunits and leads to opening of an ion-conducting channel across the plasma membrane. The sequence is that of Acetylcholine receptor subunit epsilon (CHRNE) from Bos taurus (Bovine).